The chain runs to 201 residues: Small ribosomal subunit protein uS4c (201 aa).

The tract at residues 16-43 (GALPGLTSKKPRSASDLRNQSRSGKRSQ) is disordered. The S4 RNA-binding domain occupies 89–169 (MRLDNILFRL…LPKHLTLHSF (81 aa)).

The protein belongs to the universal ribosomal protein uS4 family. In terms of assembly, part of the 30S ribosomal subunit. Contacts protein S5. The interaction surface between S4 and S5 is involved in control of translational fidelity.

It is found in the plastid. The protein localises to the chloroplast. In terms of biological role, one of the primary rRNA binding proteins, it binds directly to 16S rRNA where it nucleates assembly of the body of the 30S subunit. Functionally, with S5 and S12 plays an important role in translational accuracy. The chain is Small ribosomal subunit protein uS4c (rps4) from Nymphaea alba (White water-lily).